Here is a 290-residue protein sequence, read N- to C-terminus: Urease accessory protein UreD (290 aa).

Belongs to the UreD family. In terms of assembly, ureD, UreF and UreG form a complex that acts as a GTP-hydrolysis-dependent molecular chaperone, activating the urease apoprotein by helping to assemble the nickel containing metallocenter of UreC. The UreE protein probably delivers the nickel.

It localises to the cytoplasm. Its function is as follows. Required for maturation of urease via the functional incorporation of the urease nickel metallocenter. The sequence is that of Urease accessory protein UreD from Paenarthrobacter aurescens (strain TC1).